A 70-amino-acid chain; its full sequence is Conotoxin Pl171 (70 aa).

An N-terminal signal peptide occupies residues 1–21; the sequence is MGMRMMFTMILLVVLVTTVVS. Intrachain disulfides connect Cys54–Cys61 and Cys55–Cys67. Phe69 bears the Phenylalanine amide mark.

Belongs to the conotoxin A superfamily. In terms of tissue distribution, expressed by the venom duct.

Its subcellular location is the secreted. In terms of biological role, probable neurotoxin with unknown target. Possibly targets ion channels. The chain is Conotoxin Pl171 from Conus planorbis (Planorbis cone).